A 602-amino-acid polypeptide reads, in one-letter code: UvrABC system protein C (602 aa).

The GIY-YIG domain occupies 15-100 (DQSGVYHYFD…IKQLKPKYNI (86 aa)). In terms of domain architecture, UVR spans 206 to 241 (SKLISRLKERMEKLAENLRFEEAGELRDRIEKIKRI).

This sequence belongs to the UvrC family. In terms of assembly, interacts with UvrB in an incision complex.

It is found in the cytoplasm. In terms of biological role, the UvrABC repair system catalyzes the recognition and processing of DNA lesions. UvrC both incises the 5' and 3' sides of the lesion. The N-terminal half is responsible for the 3' incision and the C-terminal half is responsible for the 5' incision. The protein is UvrABC system protein C of Wolinella succinogenes (strain ATCC 29543 / DSM 1740 / CCUG 13145 / JCM 31913 / LMG 7466 / NCTC 11488 / FDC 602W) (Vibrio succinogenes).